The following is a 267-amino-acid chain: Taurine import ATP-binding protein TauB (267 aa).

The ABC transporter domain occupies 6–238 (FNEASLIYPA…DILAGAPASE (233 aa)). 43–50 (GRSGSGKT) is a binding site for ATP.

It belongs to the ABC transporter superfamily. Taurine importer (TC 3.A.1.17.1) family. The complex is composed of two ATP-binding proteins (TauB), two transmembrane proteins (TauC) and a solute-binding protein (TauA).

The protein resides in the cell inner membrane. The catalysed reaction is taurine(out) + ATP + H2O = taurine(in) + ADP + phosphate + H(+). Part of the ABC transporter complex TauABC involved in taurine import. Responsible for energy coupling to the transport system. This is Taurine import ATP-binding protein TauB from Sinorhizobium fredii (strain NBRC 101917 / NGR234).